Consider the following 160-residue polypeptide: Ribosome maturation factor RimP (160 aa).

The protein belongs to the RimP family.

It is found in the cytoplasm. Functionally, required for maturation of 30S ribosomal subunits. This is Ribosome maturation factor RimP from Cronobacter sakazakii (strain ATCC BAA-894) (Enterobacter sakazakii).